The primary structure comprises 295 residues: GDP-polyphosphate phosphotransferase (295 aa).

Residues 1–28 (MDIPSVDVSTATNDGASSRAKGHRSAAP) form a disordered region. Residues 7 to 16 (DVSTATNDGA) are compositionally biased toward polar residues. Phosphohistidine occurs at positions 115 and 247.

Belongs to the polyphosphate kinase 2 (PPK2) family. Class I subfamily. As to quaternary structure, interacts with Ndk. In terms of processing, autophosphorylated at His-115 and His-247 using polyP as a phosphate donor.

The catalysed reaction is [phosphate](n) + GTP = [phosphate](n+1) + GDP. Functionally, uses inorganic polyphosphate (polyP) as a donor to convert GDP to GTP. In addition, modulates nucleotide triphosphate synthesis catalyzed by the nucleoside diphosphate kinase (Ndk) in favor of GTP production over CTP or UTP. Plays an important role in survival of M.tuberculosis in macrophages. The sequence is that of GDP-polyphosphate phosphotransferase from Mycobacterium tuberculosis (strain ATCC 25618 / H37Rv).